The chain runs to 61 residues: Translational regulator CsrA (61 aa).

The protein belongs to the CsrA/RsmA family. In terms of assembly, homodimer; the beta-strands of each monomer intercalate to form a hydrophobic core, while the alpha-helices form wings that extend away from the core.

The protein localises to the cytoplasm. Its function is as follows. A key translational regulator that binds mRNA to regulate translation initiation and/or mRNA stability. Mediates global changes in gene expression, shifting from rapid growth to stress survival by linking envelope stress, the stringent response and the catabolite repression systems. Usually binds in the 5'-UTR; binding at or near the Shine-Dalgarno sequence prevents ribosome-binding, repressing translation, binding elsewhere in the 5'-UTR can activate translation and/or stabilize the mRNA. Its function is antagonized by small RNA(s). This is Translational regulator CsrA from Actinobacillus succinogenes (strain ATCC 55618 / DSM 22257 / CCUG 43843 / 130Z).